A 259-amino-acid polypeptide reads, in one-letter code: Hydroxyacylglutathione hydrolase (259 aa).

Zn(2+) contacts are provided by His-56, His-58, Asp-60, His-61, His-112, Asp-133, and His-171. A disordered region spans residues 220 to 243 (NPFLRTGETSVKEKADERSDAQNT). Over residues 229-239 (SVKEKADERSD) the composition is skewed to basic and acidic residues.

The protein belongs to the metallo-beta-lactamase superfamily. Glyoxalase II family. In terms of assembly, monomer. Zn(2+) serves as cofactor.

The enzyme catalyses an S-(2-hydroxyacyl)glutathione + H2O = a 2-hydroxy carboxylate + glutathione + H(+). The protein operates within secondary metabolite metabolism; methylglyoxal degradation; (R)-lactate from methylglyoxal: step 2/2. In terms of biological role, thiolesterase that catalyzes the hydrolysis of S-D-lactoyl-glutathione to form glutathione and D-lactic acid. The chain is Hydroxyacylglutathione hydrolase from Pseudomonas syringae pv. syringae (strain B728a).